The chain runs to 587 residues: 5-aminolevulinate synthase, erythroid-specific, mitochondrial (587 aa).

A mitochondrion-targeting transit peptide spans 1 to 49 (MVTAAMLLQCCPVLARGPTSLLGKVVKTHQFLFGIGRCPILATQGPNCS). Arginine 163 contributes to the succinyl-CoA binding site. Cysteine 258 and phenylalanine 259 together coordinate pyridoxal 5'-phosphate. Residues serine 280 and lysine 299 each coordinate succinyl-CoA. Residues serine 332, histidine 360, and threonine 388 each coordinate pyridoxal 5'-phosphate. Lysine 391 is an active-site residue. Position 391 is an N6-(pyridoxal phosphate)lysine (lysine 391). Pyridoxal 5'-phosphate-binding residues include threonine 420 and threonine 421. Threonine 508 lines the succinyl-CoA pocket.

Belongs to the class-II pyridoxal-phosphate-dependent aminotransferase family. In terms of assembly, homodimer. Interacts with SUCLA2. As to quaternary structure, interacts with SUCLA2. It depends on pyridoxal 5'-phosphate as a cofactor. Erythroid-specific.

It localises to the mitochondrion inner membrane. The catalysed reaction is succinyl-CoA + glycine + H(+) = 5-aminolevulinate + CO2 + CoA. It functions in the pathway porphyrin-containing compound metabolism; protoporphyrin-IX biosynthesis; 5-aminolevulinate from glycine: step 1/1. Down-regulated by itaconyl-CoA which acts as a competitive inhibitor of succinyl-CoA substrate. In terms of biological role, catalyzes the pyridoxal 5'-phosphate (PLP)-dependent condensation of succinyl-CoA and glycine to form aminolevulinic acid (ALA), with CoA and CO2 as by-products. Contributes significantly to heme formation during erythropoiesis. Functionally, catalyzes the pyridoxal 5'-phosphate (PLP)-dependent condensation of succinyl-CoA and glycine to form aminolevulinic acid (ALA), with CoA and CO2 as by-products. Catalytic activity is 75-85% of isoform 1 activity. Its function is as follows. Catalyzes the pyridoxal 5'-phosphate (PLP)-dependent condensation of succinyl-CoA and glycine to form aminolevulinic acid (ALA), with CoA and CO2 as by-products. Catalytic activity is 65-75% of isoform 1 activity. The protein is 5-aminolevulinate synthase, erythroid-specific, mitochondrial of Homo sapiens (Human).